Reading from the N-terminus, the 276-residue chain is Carboxysome assembly protein CcmO (276 aa).

BMC domains are found at residues 16–100 and 120–204; these read ALGV…AVLP and AIGL…DSLP. 2 disordered regions span residues 200-219 and 252-276; these read MDSLPEPQSDSEAAQPLQLP and QSALELAQETPLAEPLELPNPRDDQ.

Belongs to the bacterial microcompartments protein family. Homooligomerizes, possibly as a trimer, interacts with CcmK2 in the carboxysome.

It is found in the carboxysome. Required for formation of the carboxysome, a polyhedral inclusion where RuBisCO (ribulose bisphosphate carboxylase, rbcL-rbcS) is sequestered. Required for recruitment of major shell protein CcmK2 to the pre-carboxysome. Suggested to be a carboxysome shell protein, but it is not detected in gels, mass spectrometry or by protein sequencing. In terms of biological role, beta-carboxysome assembly initiates when soluble RuBisCO is condensed into a liquid matrix in a pre-carboxysome by the RbcS-like domains of probably both CcmM58 and CcmM35. CcmN interacts with the N-terminus of CcmM58, and then recruits the CcmK2 major shell protein via CcmN's encapsulation peptide. Shell formation requires CcmK proteins and CcmO. CcmL caps the otherwise elongated carboxysome. Once fully encapsulated carboxysomes are formed, they migrate within the cell probably via interactions with the cytoskeleton. This chain is Carboxysome assembly protein CcmO, found in Synechococcus elongatus (strain ATCC 33912 / PCC 7942 / FACHB-805) (Anacystis nidulans R2).